The following is a 155-amino-acid chain: S-ribosylhomocysteine lyase (155 aa).

Residues histidine 57, histidine 61, and cysteine 124 each coordinate Fe cation.

This sequence belongs to the LuxS family. In terms of assembly, homodimer. Fe cation serves as cofactor.

It carries out the reaction S-(5-deoxy-D-ribos-5-yl)-L-homocysteine = (S)-4,5-dihydroxypentane-2,3-dione + L-homocysteine. Its function is as follows. Involved in the synthesis of autoinducer 2 (AI-2) which is secreted by bacteria and is used to communicate both the cell density and the metabolic potential of the environment. The regulation of gene expression in response to changes in cell density is called quorum sensing. Catalyzes the transformation of S-ribosylhomocysteine (RHC) to homocysteine (HC) and 4,5-dihydroxy-2,3-pentadione (DPD). In Listeria monocytogenes serotype 4b (strain CLIP80459), this protein is S-ribosylhomocysteine lyase.